A 261-amino-acid polypeptide reads, in one-letter code: Triosephosphate isomerase (261 aa).

Position 10–12 (10–12) interacts with substrate; it reads NWK. His-100 acts as the Electrophile in catalysis. Glu-172 functions as the Proton acceptor in the catalytic mechanism. Substrate is bound by residues Gly-178, Ser-218, and 239–240; that span reads GG.

The protein belongs to the triosephosphate isomerase family. In terms of assembly, homodimer.

It is found in the cytoplasm. The catalysed reaction is D-glyceraldehyde 3-phosphate = dihydroxyacetone phosphate. The protein operates within carbohydrate biosynthesis; gluconeogenesis. It functions in the pathway carbohydrate degradation; glycolysis; D-glyceraldehyde 3-phosphate from glycerone phosphate: step 1/1. Its function is as follows. Involved in the gluconeogenesis. Catalyzes stereospecifically the conversion of dihydroxyacetone phosphate (DHAP) to D-glyceraldehyde-3-phosphate (G3P). This is Triosephosphate isomerase from Rhodococcus jostii (strain RHA1).